A 405-amino-acid polypeptide reads, in one-letter code: CMP-sialic acid transporter 4 (405 aa).

Residues 1 to 43 (MQRNGVMECSVCHSKVVAPSPRSVSRAYDKHRSKISSKYRALN) are Cytoplasmic-facing. The chain crosses the membrane as a helical span at residues 44-64 (FLLVSGDCILVGLQPILVFMS). The Lumenal portion of the chain corresponds to 65–74 (KVDGKFQFSP). The chain crosses the membrane as a helical span at residues 75 to 95 (ISVNFLTEVTKVIFAIVMLII). Residues 96–121 (QSRKQKVGEKPLLSLSTFVQAARNNA) are Cytoplasmic-facing. A helical membrane pass occupies residues 122-142 (LLAVPALLYAINNYLKFIMQL). Residue Tyr-143 is a topological domain, lumenal. Residues 144-164 (FSPATVKMLSNLKVLVIAILL) traverse the membrane as a helical segment. The Cytoplasmic segment spans residues 165-171 (KFIMRRK). The chain crosses the membrane as a helical span at residues 172-192 (FSIIQWEALALLLIGISVNQL). The Lumenal segment spans residues 193 to 203 (SSIPDGTKSFG). Residues 204-224 (LAVTTIAYIYTLIFVTVPSLA) form a helical membrane-spanning segment. Residues 225-244 (SVYNEYALKSQFDTSIYLQN) are Cytoplasmic-facing. A helical membrane pass occupies residues 245 to 265 (LFLYGYGAIFNFLGILGTVIF). Topologically, residues 266–281 (QGPESFDILRGHSRAT) are lumenal. Residues 282–302 (MFLICNNAAQGILSSFFFKYA) form a helical membrane-spanning segment. Over 303–322 (DTILKKYSSTVATIFTGLAS) the chain is Cytoplasmic. Residues 323–343 (AAFLGHTLTVNFLLGISIVFI) form a helical membrane-spanning segment. Over 344–405 (SMHQFFSPLA…TDERKPLLPI (62 aa)) the chain is Lumenal.

Belongs to the nucleotide-sugar transporter family. CMP-Sialate:CMP antiporter (TC 2.A.7.12) subfamily.

Its subcellular location is the golgi apparatus membrane. Functionally, sugar transporter involved in the transport of CMP-sialic acid from the cytoplasm into the Golgi. May transport important nucleotide sugars such as CMP-Kdo (2-keto-3-deoxy-D-manno-octulosonic acid) in physiological conditions. This Oryza sativa subsp. japonica (Rice) protein is CMP-sialic acid transporter 4.